The following is a 349-amino-acid chain: Small ribosomal subunit protein uS2 (349 aa).

This sequence belongs to the universal ribosomal protein uS2 family.

The protein is Small ribosomal subunit protein uS2 of Methylobacterium nodulans (strain LMG 21967 / CNCM I-2342 / ORS 2060).